Consider the following 839-residue polypeptide: Taste receptor type 1 member 2 (839 aa).

Positions M1–A19 are cleaved as a signal peptide. Over E20–T566 the chain is Extracellular. N-linked (GlcNAc...) asparagine glycans are attached at residues N84, N127, N248, N292, N312, N368, N428, N487, and N527. Residues I567–F587 form a helical membrane-spanning segment. The Cytoplasmic portion of the chain corresponds to W588–P602. Residues M603–G623 traverse the membrane as a helical segment. Topologically, residues P624–A635 are extracellular. A helical transmembrane segment spans residues L636–V656. The Cytoplasmic segment spans residues C657–S681. A helical membrane pass occupies residues M682–L702. Topologically, residues N703–S727 are extracellular. A helical membrane pass occupies residues L728–M748. The Cytoplasmic segment spans residues G749 to K760. A helical membrane pass occupies residues F761 to S781. At A782–N784 the chain is on the extracellular side. The chain crosses the membrane as a helical span at residues G785–L805. Residues G806 to D839 lie on the Cytoplasmic side of the membrane.

This sequence belongs to the G-protein coupled receptor 3 family. TAS1R subfamily. Forms heterodimers with TAS1R3.

Its subcellular location is the cell membrane. Functionally, putative taste receptor. TAS1R2/TAS1R3 recognizes diverse natural and synthetic sweeteners. The chain is Taste receptor type 1 member 2 (TAS1R2) from Papio hamadryas (Hamadryas baboon).